Consider the following 38-residue polypeptide: Photosystem II reaction center protein X (38 aa).

Residues 9 to 29 (ISSLTAGGLVVLTIAVALIVI) traverse the membrane as a helical segment.

The protein belongs to the PsbX family. Type 1 subfamily. In terms of assembly, PSII is composed of 1 copy each of membrane proteins PsbA, PsbB, PsbC, PsbD, PsbE, PsbF, PsbH, PsbI, PsbJ, PsbK, PsbL, PsbM, PsbT, PsbX, PsbY, PsbZ, Psb30/Ycf12, at least 3 peripheral proteins of the oxygen-evolving complex and a large number of cofactors. It forms dimeric complexes.

It localises to the plastid. It is found in the chloroplast thylakoid membrane. In terms of biological role, involved in the binding and/or turnover of quinones at the Q(B) site of photosystem II (PSII). PSII is a light-driven water plastoquinone oxidoreductase, using light energy to abstract electrons from H(2)O, generating a proton gradient subsequently used for ATP formation. This Trieres chinensis (Marine centric diatom) protein is Photosystem II reaction center protein X.